An 893-amino-acid chain; its full sequence is Eukaryotic translation initiation factor 3 subunit A (893 aa).

Positions 319 to 502 (LQRMAAHVLL…NSIFFGTDLT (184 aa)) constitute a PCI domain. 2 coiled-coil regions span residues 576–707 (QKII…RAKR) and 784–881 (EIAL…REVA). Disordered stretches follow at residues 592-634 (AREL…EIQA) and 837-893 (AEAR…RRRQ). The segment covering 837–881 (AEARRLEREAEDEKRRQQYEKQRAKEEEAERKIQEDRDRLAREVA) has biased composition (basic and acidic residues).

It belongs to the eIF-3 subunit A family. As to quaternary structure, component of the eukaryotic translation initiation factor 3 (eIF-3) complex. The eIF-3 complex interacts with pix.

It localises to the cytoplasm. In terms of biological role, RNA-binding component of the eukaryotic translation initiation factor 3 (eIF-3) complex, which is involved in protein synthesis of a specialized repertoire of mRNAs and, together with other initiation factors, stimulates binding of mRNA and methionyl-tRNAi to the 40S ribosome. The eIF-3 complex specifically targets and initiates translation of a subset of mRNAs involved in cell proliferation. The sequence is that of Eukaryotic translation initiation factor 3 subunit A from Drosophila grimshawi (Hawaiian fruit fly).